A 224-amino-acid polypeptide reads, in one-letter code: uncharacterized protein (224 aa).

The signal sequence occupies residues Met1 to Gly21. Cys22 carries the N-palmitoyl cysteine lipid modification. The S-diacylglycerol cysteine moiety is linked to residue Cys22.

It to M.bovis LprP.

Its subcellular location is the cell membrane. This is an uncharacterized protein from Mycobacterium tuberculosis (strain ATCC 25618 / H37Rv).